The sequence spans 108 residues: uncharacterized protein (108 aa).

A helical membrane pass occupies residues L64–I84.

Its subcellular location is the membrane. This is an uncharacterized protein from Schizosaccharomyces pombe (strain 972 / ATCC 24843) (Fission yeast).